The chain runs to 601 residues: Aspartate--tRNA ligase (601 aa).

Glu183 contributes to the L-aspartate binding site. An aspartate region spans residues 207 to 210 (QIFK). Arg229 contacts L-aspartate. ATP-binding positions include 229–231 (RDE) and Gln238. His457 contacts L-aspartate. Glu497 is a binding site for ATP. Arg504 serves as a coordination point for L-aspartate. 549 to 552 (GIDR) provides a ligand contact to ATP.

Belongs to the class-II aminoacyl-tRNA synthetase family. Type 1 subfamily. In terms of assembly, homodimer.

It is found in the cytoplasm. The catalysed reaction is tRNA(Asp) + L-aspartate + ATP = L-aspartyl-tRNA(Asp) + AMP + diphosphate. Functionally, catalyzes the attachment of L-aspartate to tRNA(Asp) in a two-step reaction: L-aspartate is first activated by ATP to form Asp-AMP and then transferred to the acceptor end of tRNA(Asp). The sequence is that of Aspartate--tRNA ligase from Leptospira interrogans serogroup Icterohaemorrhagiae serovar Lai (strain 56601).